The chain runs to 533 residues: Sterol 26-hydroxylase, mitochondrial (533 aa).

A mitochondrion-targeting transit peptide spans M1–A32. Residues L38–S58 are disordered. Residues K142 and K375 each carry the N6-acetyllysine modification. A sterol-binding region spans residues P386–P400. C479 lines the heme pocket. An N6-acetyllysine mark is found at K512 and K523.

This sequence belongs to the cytochrome P450 family. As to quaternary structure, interacts with HSP70; this interaction is required for initial targeting to mitochondria. Heme is required as a cofactor. As to expression, expressed in liver, kidney and ovary.

The protein localises to the mitochondrion inner membrane. The catalysed reaction is 5beta-cholestane-3alpha,7alpha,12alpha-triol + 6 reduced [adrenodoxin] + 3 O2 + 5 H(+) = (25R)-3alpha,7alpha,12alpha-trihydroxy-5beta-cholestan-26-oate + 6 oxidized [adrenodoxin] + 4 H2O. It carries out the reaction cholestanol + 2 reduced [adrenodoxin] + O2 + 2 H(+) = (25R)-26-hydroxycholestanol + 2 oxidized [adrenodoxin] + H2O. The enzyme catalyses (25R)-3beta-hydroxycholest-5-en-7-one-26-al + 2 reduced [adrenodoxin] + O2 + H(+) = (25R)-3beta-hydroxycholest-5-en-7-one-26-oate + 2 oxidized [adrenodoxin] + H2O. It catalyses the reaction (25R)-3beta,26-dihydroxycholest-5-en-7-one + 2 reduced [adrenodoxin] + O2 + 2 H(+) = (25R)-3beta-hydroxycholest-5-en-7-one-26-al + 2 oxidized [adrenodoxin] + 2 H2O. The catalysed reaction is 7-oxocholesterol + 2 reduced [adrenodoxin] + O2 + 2 H(+) = (25R)-3beta,26-dihydroxycholest-5-en-7-one + 2 oxidized [adrenodoxin] + H2O. It carries out the reaction calciol + 2 reduced [adrenodoxin] + O2 + 2 H(+) = calcidiol + 2 oxidized [adrenodoxin] + H2O. The enzyme catalyses (25R)-5beta-cholestane-3alpha,7alpha,12alpha,26-tetrol + 2 reduced [adrenodoxin] + O2 + 2 H(+) = (25R)-3alpha,7alpha,12alpha-trihydroxy-5beta-cholestan-26-al + 2 oxidized [adrenodoxin] + 2 H2O. It catalyses the reaction 2 reduced [adrenodoxin] + cholesterol + O2 + 2 H(+) = (25R)-cholest-5-ene-3beta,26-diol + 2 oxidized [adrenodoxin] + H2O. The catalysed reaction is (25R)-3beta,4beta-dihydroxycholest-5-en-26-al + 2 reduced [adrenodoxin] + O2 + H(+) = (25R)-3beta,4beta-dihydroxycholest-5-en-26-oate + 2 oxidized [adrenodoxin] + H2O. It carries out the reaction (25R)-4beta,26-dihydroxycholesterol + 2 reduced [adrenodoxin] + O2 + 2 H(+) = (25R)-3beta,4beta-dihydroxycholest-5-en-26-al + 2 oxidized [adrenodoxin] + 2 H2O. The enzyme catalyses 4beta-hydroxycholesterol + 2 reduced [adrenodoxin] + O2 + 2 H(+) = (25R)-4beta,26-dihydroxycholesterol + 2 oxidized [adrenodoxin] + H2O. It catalyses the reaction (25R)-3beta-hydroxy-5-cholesten-26-al + 2 reduced [adrenodoxin] + O2 + H(+) = (25R)-3beta-hydroxy-5-cholestenoate + 2 oxidized [adrenodoxin] + H2O. The catalysed reaction is (25R)-cholest-5-ene-3beta,26-diol + 2 reduced [adrenodoxin] + O2 + 2 H(+) = (25R)-3beta-hydroxy-5-cholesten-26-al + 2 oxidized [adrenodoxin] + 2 H2O. It carries out the reaction (25R)-3alpha,7alpha,12alpha-trihydroxy-5beta-cholestan-26-al + 2 reduced [adrenodoxin] + O2 + H(+) = (25R)-3alpha,7alpha,12alpha-trihydroxy-5beta-cholestan-26-oate + 2 oxidized [adrenodoxin] + H2O. The enzyme catalyses 5beta-cholestane-3alpha,7alpha,12alpha-triol + 2 reduced [adrenodoxin] + O2 + 2 H(+) = (25R)-5beta-cholestane-3alpha,7alpha,12alpha,26-tetrol + 2 oxidized [adrenodoxin] + H2O. It functions in the pathway hormone biosynthesis; cholecalciferol biosynthesis. It participates in steroid metabolism; cholesterol degradation. Its pathway is lipid metabolism; bile acid biosynthesis. Cytochrome P450 monooxygenase that catalyzes regio- and stereospecific hydroxylation of cholesterol and its derivatives. Hydroxylates (with R stereochemistry) the terminal methyl group of cholesterol side-chain in a three step reaction to yield at first a C26 alcohol, then a C26 aldehyde and finally a C26 acid. Regulates cholesterol homeostasis by catalyzing the conversion of excess cholesterol to bile acids via both the 'neutral' (classic) and the 'acid' (alternative) pathways. May also regulate cholesterol homeostasis via generation of active oxysterols, which act as ligands for NR1H2 and NR1H3 nuclear receptors, modulating the transcription of genes involved in lipid metabolism. Plays a role in cholestanol metabolism in the cerebellum. Similarly to cholesterol, hydroxylates cholestanol and may facilitate sterol diffusion through the blood-brain barrier to the systemic circulation for further degradation. Also hydroxylates retinal 7-ketocholesterol, a noxious oxysterol with pro-inflammatory and pro-apoptotic effects, and may play a role in its elimination from the retinal pigment epithelium. May play a redundant role in vitamin D biosynthesis. Catalyzes 25-hydroxylation of vitamin D3 that is required for its conversion to a functionally active form. This Rattus norvegicus (Rat) protein is Sterol 26-hydroxylase, mitochondrial (Cyp27a1).